A 471-amino-acid chain; its full sequence is Glutamate--tRNA ligase (471 aa).

Positions 9-19 match the 'HIGH' region motif; the sequence is PSPTGYLHVGG. Residues C98, C100, C125, and D127 each contribute to the Zn(2+) site. Positions 237–241 match the 'KMSKS' region motif; it reads KLSKR. K240 contacts ATP.

Belongs to the class-I aminoacyl-tRNA synthetase family. Glutamate--tRNA ligase type 1 subfamily. In terms of assembly, monomer. Zn(2+) serves as cofactor.

The protein resides in the cytoplasm. It carries out the reaction tRNA(Glu) + L-glutamate + ATP = L-glutamyl-tRNA(Glu) + AMP + diphosphate. Its function is as follows. Catalyzes the attachment of glutamate to tRNA(Glu) in a two-step reaction: glutamate is first activated by ATP to form Glu-AMP and then transferred to the acceptor end of tRNA(Glu). This Yersinia enterocolitica serotype O:8 / biotype 1B (strain NCTC 13174 / 8081) protein is Glutamate--tRNA ligase.